Reading from the N-terminus, the 224-residue chain is ATP-dependent dethiobiotin synthetase BioD (224 aa).

An ATP-binding site is contributed by 12 to 17 (GVGKTF). Threonine 16 is a Mg(2+) binding site. The active site involves lysine 37. Threonine 41 serves as a coordination point for substrate. Residues asparagine 52, 107 to 110 (EGAG), 167 to 168 (GS), 197 to 199 (PEG), and glutamate 204 contribute to the ATP site. Positions 52 and 107 each coordinate Mg(2+).

The protein belongs to the dethiobiotin synthetase family. As to quaternary structure, homodimer. The cofactor is Mg(2+).

It is found in the cytoplasm. The catalysed reaction is (7R,8S)-7,8-diammoniononanoate + CO2 + ATP = (4R,5S)-dethiobiotin + ADP + phosphate + 3 H(+). The protein operates within cofactor biosynthesis; biotin biosynthesis; biotin from 7,8-diaminononanoate: step 1/2. Functionally, catalyzes a mechanistically unusual reaction, the ATP-dependent insertion of CO2 between the N7 and N8 nitrogen atoms of 7,8-diaminopelargonic acid (DAPA, also called 7,8-diammoniononanoate) to form a ureido ring. The sequence is that of ATP-dependent dethiobiotin synthetase BioD from Corynebacterium glutamicum (strain ATCC 13032 / DSM 20300 / JCM 1318 / BCRC 11384 / CCUG 27702 / LMG 3730 / NBRC 12168 / NCIMB 10025 / NRRL B-2784 / 534).